The following is a 68-amino-acid chain: DNA-directed RNA polymerase subunit Rpo10 (68 aa).

4 residues coordinate Zn(2+): Cys-7, Cys-10, Cys-44, and Cys-45.

This sequence belongs to the archaeal Rpo10/eukaryotic RPB10 RNA polymerase subunit family. In terms of assembly, part of the RNA polymerase complex. It depends on Zn(2+) as a cofactor.

The protein resides in the cytoplasm. It carries out the reaction RNA(n) + a ribonucleoside 5'-triphosphate = RNA(n+1) + diphosphate. Its function is as follows. DNA-dependent RNA polymerase (RNAP) catalyzes the transcription of DNA into RNA using the four ribonucleoside triphosphates as substrates. The polypeptide is DNA-directed RNA polymerase subunit Rpo10 (Methanococcus maripaludis (strain C5 / ATCC BAA-1333)).